The chain runs to 352 residues: Rhodopsin (352 aa).

Residues 1–36 lie on the Extracellular side of the membrane; it reads MNGTEGPFFYIPMVNTTGIVRSPYEYPQYYLVNPAA. Asn2 and Asn15 each carry an N-linked (GlcNAc...) asparagine glycan. The chain crosses the membrane as a helical span at residues 37-61; that stretch reads YACLGAYMFFLILVGFPVNFLTLYV. The Cytoplasmic portion of the chain corresponds to 62–73; sequence TLEHKKLRTPLN. Residues 74-96 traverse the membrane as a helical segment; the sequence is YILLNLAVADLFMVFGGFTTTMY. Over 97-110 the chain is Extracellular; it reads TSMHGYFVLGRLGC. Cys110 and Cys187 are disulfide-bonded. The helical transmembrane segment at 111–133 threads the bilayer; sequence NIEGFFATLGGEIALWSLVVLAI. The short motif at 134-136 is the 'Ionic lock' involved in activated form stabilization element; the sequence is ERW. Residues 134-152 are Cytoplasmic-facing; that stretch reads ERWVVVCKPISNFRFGENH. A helical transmembrane segment spans residues 153 to 173; that stretch reads AIMGVAFTWFMASACAVPPLV. Residues 174 to 202 lie on the Extracellular side of the membrane; sequence GWSRYIPEGMQCSCGVDYYTRAEGFNNES. The N-linked (GlcNAc...) asparagine glycan is linked to Asn200. The chain crosses the membrane as a helical span at residues 203–224; the sequence is FVIYMFIVHFCIPLAVVGFCYG. The Cytoplasmic segment spans residues 225 to 252; that stretch reads RLLCAVKEAAAAQQESETTQRAEREVSR. A helical membrane pass occupies residues 253–274; that stretch reads MVVIMVIGFLVCWLPYASVAWY. Residues 275–286 are Extracellular-facing; it reads IFTHQGSEFGPP. Residues 287–308 form a helical membrane-spanning segment; it reads FMTVPAFFAKSSSIYNPMIYIC. Lys296 carries the post-translational modification N6-(retinylidene)lysine. The Cytoplasmic portion of the chain corresponds to 309-352; sequence MNKQFRHCMITTLCCGKNPFEEEEGASTTKTEASSVSSSSVSPA. 2 S-palmitoyl cysteine lipidation sites follow: Cys322 and Cys323. The segment at 331–352 is disordered; it reads EEGASTTKTEASSVSSSSVSPA. The segment covering 342 to 352 has biased composition (low complexity); it reads SSVSSSSVSPA.

Belongs to the G-protein coupled receptor 1 family. Opsin subfamily. In terms of processing, phosphorylated on some or all of the serine and threonine residues present in the C-terminal region. Contains one covalently linked retinal chromophore.

The protein localises to the membrane. Its subcellular location is the cell projection. The protein resides in the cilium. It is found in the photoreceptor outer segment. Photoreceptor required for image-forming vision at low light intensity. While most salt water fish species use retinal as chromophore, most freshwater fish use 3-dehydroretinal, or a mixture of retinal and 3-dehydroretinal. Light-induced isomerization of 11-cis to all-trans retinal triggers a conformational change that activates signaling via G-proteins. Subsequent receptor phosphorylation mediates displacement of the bound G-protein alpha subunit by arrestin and terminates signaling. This chain is Rhodopsin (rho), found in Zosterisessor ophiocephalus (Grass goby).